Reading from the N-terminus, the 147-residue chain is uncharacterized protein (147 aa).

Residues 44–147 (LVGYIDKEIH…LKSIKERLSI (104 aa)) form the HTH LytTR-type domain.

The protein resides in the cytoplasm. This is an uncharacterized protein from Staphylococcus aureus (strain COL).